Here is a 95-residue protein sequence, read N- to C-terminus: Small integral membrane protein 18 (95 aa).

The chain crosses the membrane as a helical span at residues 35–55; the sequence is CFVILLLFIFTVVSLVVLAFL.

It localises to the membrane. The chain is Small integral membrane protein 18 (SMIM18) from Homo sapiens (Human).